The chain runs to 45 residues: Lysis protein for colicin E1* (45 aa).

An N-terminal signal peptide occupies residues 1 to 17 (MRKRFFVGIFAINLLVG). The N-palmitoyl cysteine moiety is linked to residue C18. C18 carries the S-diacylglycerol cysteine lipid modification.

The protein resides in the cell outer membrane. In terms of biological role, lysis proteins are required for both colicin release and partial cell lysis. The polypeptide is Lysis protein for colicin E1* (kil) (Shigella sonnei).